A 139-amino-acid polypeptide reads, in one-letter code: Type II methyltransferase M.AquIB (139 aa).

In terms of domain architecture, SAM-dependent MTase C5-type spans 1–135 (MDIKNVHIKN…KAVSEQLLDV (135 aa)). The disordered stretch occupies residues 38–58 (KTFGSTYRRLDPNQPSPTVTR).

It belongs to the class I-like SAM-binding methyltransferase superfamily. C5-methyltransferase family. As to quaternary structure, heterodimer of an alpha and a beta subunit.

It carries out the reaction a 2'-deoxycytidine in DNA + S-adenosyl-L-methionine = a 5-methyl-2'-deoxycytidine in DNA + S-adenosyl-L-homocysteine + H(+). Functionally, a methylase, recognizes the double-stranded sequence 5'-CYCGRG-3', methylates C-1 on both strands, and protects the DNA from cleavage by the AquI endonuclease. In Picosynechococcus sp. (strain ATCC 27264 / PCC 7002 / PR-6) (Agmenellum quadruplicatum), this protein is Type II methyltransferase M.AquIB (aquIMB).